The following is a 471-amino-acid chain: Alkaline phosphatase (471 aa).

An N-terminal signal peptide occupies residues 1-21; sequence MKQSTIALALLPLLFTPVTKA. Aspartate 73 is a binding site for Mg(2+). Aspartate 73 is a Zn(2+) binding site. Serine 124 (phosphoserine intermediate) is an active-site residue. Aspartate 175 and threonine 177 together coordinate Mg(2+). 2 cysteine pairs are disulfide-bonded: cysteine 190–cysteine 200 and cysteine 308–cysteine 358. Residue glutamate 344 participates in Mg(2+) binding. Positions 349, 353, 391, 392, and 434 each coordinate Zn(2+).

Belongs to the alkaline phosphatase family. In terms of assembly, isozymes 1 and 3 are a dimer of identical chains, isozyme 2 is a dimer of heterogeneous chains, one of each of the subunits from isozymes 1 and 3. It depends on Mg(2+) as a cofactor. Requires Zn(2+) as cofactor.

It is found in the periplasm. It carries out the reaction a phosphate monoester + H2O = an alcohol + phosphate. This Escherichia coli (strain K12) protein is Alkaline phosphatase (phoA).